The following is a 152-amino-acid chain: Transcriptional regulator MraZ (152 aa).

2 SpoVT-AbrB domains span residues alanine 5–glutamate 52 and alanine 81–arginine 124.

Belongs to the MraZ family. As to quaternary structure, forms oligomers.

The protein localises to the cytoplasm. It localises to the nucleoid. This chain is Transcriptional regulator MraZ, found in Tolumonas auensis (strain DSM 9187 / NBRC 110442 / TA 4).